Here is a 278-residue protein sequence, read N- to C-terminus: Large ribosomal subunit protein uL2 (278 aa).

Residues His201–Lys278 form a disordered region. The segment covering Gly210–Val221 has biased composition (basic residues).

Belongs to the universal ribosomal protein uL2 family. As to quaternary structure, part of the 50S ribosomal subunit. Forms a bridge to the 30S subunit in the 70S ribosome.

Its function is as follows. One of the primary rRNA binding proteins. Required for association of the 30S and 50S subunits to form the 70S ribosome, for tRNA binding and peptide bond formation. It has been suggested to have peptidyltransferase activity; this is somewhat controversial. Makes several contacts with the 16S rRNA in the 70S ribosome. In Agrobacterium fabrum (strain C58 / ATCC 33970) (Agrobacterium tumefaciens (strain C58)), this protein is Large ribosomal subunit protein uL2.